Reading from the N-terminus, the 320-residue chain is Ferrochelatase (320 aa).

Fe cation-binding residues include H194 and E275.

It belongs to the ferrochelatase family. Monomer.

The protein localises to the cytoplasm. It carries out the reaction heme b + 2 H(+) = protoporphyrin IX + Fe(2+). It functions in the pathway porphyrin-containing compound metabolism; protoheme biosynthesis; protoheme from protoporphyrin-IX: step 1/1. Functionally, catalyzes the ferrous insertion into protoporphyrin IX. The protein is Ferrochelatase of Shigella flexneri serotype 5b (strain 8401).